The chain runs to 132 residues: Small ribosomal subunit protein uS8 (132 aa).

The protein belongs to the universal ribosomal protein uS8 family. As to quaternary structure, part of the 30S ribosomal subunit. Contacts proteins S5 and S12.

One of the primary rRNA binding proteins, it binds directly to 16S rRNA central domain where it helps coordinate assembly of the platform of the 30S subunit. This is Small ribosomal subunit protein uS8 from Rubrobacter xylanophilus (strain DSM 9941 / JCM 11954 / NBRC 16129 / PRD-1).